We begin with the raw amino-acid sequence, 336 residues long: tRNA (guanine(10)-N2)-dimethyltransferase (336 aa).

The 98-residue stretch at 50–147 (KILKKRLAYA…NDRFILTRRL (98 aa)) folds into the THUMP domain.

This sequence belongs to the methyltransferase superfamily. Trm-G10 family. As to quaternary structure, monomer.

It is found in the cytoplasm. It carries out the reaction guanosine(10) in tRNA + 2 S-adenosyl-L-methionine = N(2)-dimethylguanosine(10) in tRNA + 2 S-adenosyl-L-homocysteine + 2 H(+). Its function is as follows. Catalyzes the adenosylmethionine-dependent methylation of the exocyclic amino group (N(2)) of guanosine at position 10 of various tRNAs. Acts via a two-step process that leads to the formation of either N(2)-monomethyl (m(2)G) or N(2)-dimethylguanosine (m(2)(2)G). This Methanothermobacter thermautotrophicus (strain ATCC 29096 / DSM 1053 / JCM 10044 / NBRC 100330 / Delta H) (Methanobacterium thermoautotrophicum) protein is tRNA (guanine(10)-N2)-dimethyltransferase (trmG10).